Consider the following 296-residue polypeptide: Nucleotide-binding protein SZO_12220 (296 aa).

Residue 13–20 (GMSGAGKT) coordinates ATP. A GTP-binding site is contributed by 63–66 (DMRS).

Belongs to the RapZ-like family.

Its function is as follows. Displays ATPase and GTPase activities. The protein is Nucleotide-binding protein SZO_12220 of Streptococcus equi subsp. zooepidemicus (strain H70).